Reading from the N-terminus, the 175-residue chain is Large ribosomal subunit protein uL10 (175 aa).

The protein belongs to the universal ribosomal protein uL10 family. Part of the ribosomal stalk of the 50S ribosomal subunit. The N-terminus interacts with L11 and the large rRNA to form the base of the stalk. The C-terminus forms an elongated spine to which L12 dimers bind in a sequential fashion forming a multimeric L10(L12)X complex.

Forms part of the ribosomal stalk, playing a central role in the interaction of the ribosome with GTP-bound translation factors. The sequence is that of Large ribosomal subunit protein uL10 from Synechococcus sp. (strain CC9902).